A 400-amino-acid chain; its full sequence is Phosphoglycerate kinase (400 aa).

Residues 24 to 26 (DFN), R39, 62 to 65 (HLGK), R123, and R156 contribute to the substrate site. ATP-binding positions include K207, G298, E329, and 356–359 (GGDS).

This sequence belongs to the phosphoglycerate kinase family. In terms of assembly, monomer.

It localises to the cytoplasm. The catalysed reaction is (2R)-3-phosphoglycerate + ATP = (2R)-3-phospho-glyceroyl phosphate + ADP. Its pathway is carbohydrate degradation; glycolysis; pyruvate from D-glyceraldehyde 3-phosphate: step 2/5. This chain is Phosphoglycerate kinase, found in Clostridioides difficile (strain 630) (Peptoclostridium difficile).